We begin with the raw amino-acid sequence, 236 residues long: NEP1-interacting protein 1 (236 aa).

The Lumenal, thylakoid segment spans residues 1 to 44 (MASSRFQSGFCPISSCPSLENFIERIKDACRFTLSAVLGTILSA). A helical membrane pass occupies residues 45–65 (VLTFFFALVGTLLGALTGALI). The Stromal segment spans residues 66–78 (GQETESGFIRGAA). Residues 79-99 (VGAISGAVFSIEVFESSLVLW) form a helical membrane-spanning segment. The Lumenal, thylakoid portion of the chain corresponds to 100 to 104 (KSNES). The helical transmembrane segment at 105-125 (RFGCLLYLIDVIVSLISGRLV) threads the bilayer. Over 126–236 (RERIGPAMLS…GSCPMCRRDL (111 aa)) the chain is Stromal. The segment at 191–233 (CSVCLQDFQLGETVRSLPHCHHMFHLPCIDNWLFRHGSCPMCR) adopts an RING-type; atypical zinc-finger fold.

Belongs to the RING-type zinc finger family. NIP subfamily. Interacts with RPOT2.

It is found in the plastid. The protein localises to the chloroplast thylakoid membrane. Intrinsic thylakoid membrane protein that fixes RPOT2 on the stromal side of the thylakoid membrane. The polypeptide is NEP1-interacting protein 1 (NIP1) (Arabidopsis thaliana (Mouse-ear cress)).